The sequence spans 466 residues: Ribulose bisphosphate carboxylase large chain (466 aa).

An N6,N6,N6-trimethyllysine modification is found at Lys5. Positions 114 and 164 each coordinate substrate. The active-site Proton acceptor is the Lys166. Lys168 serves as a coordination point for substrate. The Mg(2+) site is built by Lys192, Asp194, and Glu195. Residue Lys192 is modified to N6-carboxylysine. The Proton acceptor role is filled by His285. Substrate-binding residues include Arg286, His318, and Ser370.

The protein belongs to the RuBisCO large chain family. Type I subfamily. As to quaternary structure, heterohexadecamer of 8 large chains and 8 small chains; disulfide-linked. The disulfide link is formed within the large subunit homodimers. The cofactor is Mg(2+). In terms of processing, the disulfide bond which can form in the large chain dimeric partners within the hexadecamer appears to be associated with oxidative stress and protein turnover.

Its subcellular location is the plastid. It localises to the chloroplast. It catalyses the reaction 2 (2R)-3-phosphoglycerate + 2 H(+) = D-ribulose 1,5-bisphosphate + CO2 + H2O. The catalysed reaction is D-ribulose 1,5-bisphosphate + O2 = 2-phosphoglycolate + (2R)-3-phosphoglycerate + 2 H(+). RuBisCO catalyzes two reactions: the carboxylation of D-ribulose 1,5-bisphosphate, the primary event in carbon dioxide fixation, as well as the oxidative fragmentation of the pentose substrate in the photorespiration process. Both reactions occur simultaneously and in competition at the same active site. This is Ribulose bisphosphate carboxylase large chain from Tropaeolum majus (Common nasturtium).